The sequence spans 662 residues: MLQRDAVIDVDESEIPPIPFVLAFNDLTYNVTLQQRFGLRFGHSPAKIKTLLNGITGEAKEGEILAILGASGAGKSTLIDALAGQIAEGSLKGTVTLNGEALQSRLLRVISAYVMQEDLLFPMLTVEETLMFAAEFRLPRSLSKSKKRNRVETLIDQLGLTTVKNTVIGDEGHRGVSGGERRRVSIGTDIIHDPIVLFLDEPTSGLDSTSAFMVVQVLKKIARSGSIVIMSIHQPSGRIMEFLDRVIVLSSGQIVFSDSPATLPLFFSEFGSPIPEKENIAEFTLDLIKDLEGSPEGTRGLVEFNRNWQHRKLRVSQEPHHNSSSLGEAINASISRGKLVSTSYRSIPSYVNPWWVETVILAKRYMINWTRTPELIGTRVFIVMMTGFLLATVYWKVDDSPRGVQERLSFFSFAMATMFYSCADGLPAFIQERYIFLRETAHNAYRRSSYVISHSLVTLPHLFALSIGFAATTFWFVGLNGGLAGFIYYLMIIFASFWSGCSFVTFVSGVIPNVMMSYMVTFGYLSYCLLFSGFYVNRDRIHLYWIWIHYISLLKYPYEAVLHNEFDDPSRCFVRGNQVFDNTIMEGVSETTKAKLLETMSGYLGMELTESTCLTTGSDLLKQHGIEQLDKWGCLWVTLAWGFFFRILFYFSLLLGSKNKRA.

In terms of domain architecture, ABC transporter spans Leu-22–Glu-276. Gly-69–Ser-76 provides a ligand contact to ATP. The ABC transmembrane type-2 domain occupies Val-356–Phe-566. 6 helical membrane passes run Leu-375 to Trp-395, Phe-410 to Ile-430, Val-451 to Ala-471, Phe-486 to Ser-508, Val-514 to Val-536, and Leu-635 to Leu-655.

The protein belongs to the ABC transporter superfamily. ABCG family. Eye pigment precursor importer (TC 3.A.1.204) subfamily.

The protein resides in the membrane. The protein is ABC transporter G family member 17 (ABCG17) of Arabidopsis thaliana (Mouse-ear cress).